A 134-amino-acid chain; its full sequence is Cytochrome b5 (134 aa).

Ala2 carries the post-translational modification N-acetylalanine. 3 positions are modified to N6-acetyllysine: Lys7, Lys10, and Lys19. Residues 9-85 enclose the Cytochrome b5 heme-binding domain; the sequence is VKYYTLEEIQ…SKTFIIGELH (77 aa). His44 and His68 together coordinate heme. The helical transmembrane segment at 109–131 threads the bilayer; sequence WWTNWLIPAISALFVALIYHLYT.

This sequence belongs to the cytochrome b5 family.

It localises to the endoplasmic reticulum membrane. It is found in the microsome membrane. Cytochrome b5 is a membrane-bound hemoprotein functioning as an electron carrier for several membrane-bound oxygenases. The protein is Cytochrome b5 (CYB5A) of Bos taurus (Bovine).